The chain runs to 672 residues: Spermatid perinuclear RNA-binding protein (672 aa).

A DZF domain is found at 5–362; sequence RSFANDDRHV…ALKRPFEDGV (358 aa). Residues 348–370 form a disordered region; it reads GTGSSALKRPFEDGVGDDKDPNK. Positions 356–370 are enriched in basic and acidic residues; it reads RPFEDGVGDDKDPNK. Residues 386–452 enclose the DRBM 1 domain; the sequence is DLMNALMRLN…AVKVLQAMGY (67 aa). A disordered region spans residues 463–494; that stretch reads VSSDEKSDNEGKNETVSSISSNNTGNSTADTS. A compositionally biased stretch (basic and acidic residues) spans 465–475; the sequence is SDEKSDNEGKN. The segment covering 477 to 490 has biased composition (low complexity); that stretch reads TVSSISSNNTGNST. In terms of domain architecture, DRBM 2 spans 509 to 575; sequence SGKNPVMELN…ALAALEKLFS (67 aa).

Its subcellular location is the cytoplasm. May be involved in normal spermatogenesis and sperm function. Binds to double-stranded DNA and RNA. This Gallus gallus (Chicken) protein is Spermatid perinuclear RNA-binding protein (STRBP).